A 499-amino-acid chain; its full sequence is Neuronal acetylcholine receptor subunit alpha-3 (499 aa).

Positions 1-25 (MGVVLPPPPLSMLMLVLMLLPVASA) are cleaved as a signal peptide. Over 26 to 244 (SEAEHRLFQY…PLFYTINLII (219 aa)) the chain is Extracellular. Asn-49 and Asn-166 each carry an N-linked (GlcNAc...) asparagine glycan. Cystine bridges form between Cys-153/Cys-167 and Cys-217/Cys-218. Residues 245–260 (PCLLISFLTVLVFYLP) traverse the membrane as a helical segment. The Cytoplasmic segment spans residues 261–262 (SD). A helical transmembrane segment spans residues 263–279 (CGEKVTLCISVLLSLTV). Glu-265 lines the Na(+) pocket. Topologically, residues 280–301 (FLLVITETIPSTSLVIPLIGEY) are extracellular. Residues 302–320 (LLFTMIFVTLSIVITVFVL) form a helical membrane-spanning segment. Over 321 to 468 (NVHYRTPTTH…QDDWKYVAMV (148 aa)) the chain is Cytoplasmic. Ser-407 and Ser-410 each carry phosphoserine. The helical transmembrane segment at 469-487 (IDRIFLWVFILVCILGTAG) threads the bilayer. Residues 488–499 (LFLQPLMARDDT) lie on the Extracellular side of the membrane.

This sequence belongs to the ligand-gated ion channel (TC 1.A.9) family. Acetylcholine receptor (TC 1.A.9.1) subfamily. Alpha-3/CHRNA3 sub-subfamily. In terms of assembly, neuronal AChR is composed of two different types of subunits: alpha and beta. CHRNA3/Alpha-3 subunit can be combined to CHRNB2/beta-2 or CHRNB4/beta-4 to give rise to functional receptors. Part of a complex composed of STUB1/CHIP, VCP/p97, CHRNA3, and UBXN2A that modulates the ubiquitination and endoplasmic reticulum-associated degradation (ERAD) of CHRNA3. Within the complex UBXN2A acts as a scaffold protein required for the interaction of CHRNA3 with VCP/p97, this interaction also inhibits CHRNA3 ubiquitination by STUB1/CHIP and subsequently ERAD. Interacts with UBXN2A (via SEP domain), the interaction is required for the interaction of CHRNA3 in the STUB1:VCP:UBXN2A complex. Interacts with RIC3; which is required for proper folding and assembly. Interacts with LYPD6. Post-translationally, ubiquitinated; by STUB1/CHIP and thereafter degraded by the 26S proteosome complex. As to expression, expressed in the brain (at protein level).

Its subcellular location is the synaptic cell membrane. It is found in the cell membrane. The protein localises to the endoplasmic reticulum. It localises to the golgi apparatus. It carries out the reaction K(+)(in) = K(+)(out). The enzyme catalyses Na(+)(in) = Na(+)(out). The catalysed reaction is Ca(2+)(in) = Ca(2+)(out). Its activity is regulated as follows. Activated by a myriad of ligands such as acetylcholine, cytisine, nicotine, choline and epibatidine. The heteropentamer CHRNA3:CHRNB2 activity is blocked by alpha-conotoxins ImI, ImII, PnIA, GID and MII. The heteropentamer CHRNA3:CHRNB4 activity is blocked by the alpha-conotoxin ImI. Its function is as follows. Component of neuronal acetylcholine receptors (nAChRs) that function as pentameric, ligand-gated cation channels with high calcium permeability among other activities. nAChRs are excitatory neurotrasnmitter receptors formed by a collection of nAChR subunits known to mediate synaptic transmission in the nervous system and the neuromuscular junction. Each nAchR subunit confers differential attributes to channel properties, including activation, deactivation and desensitization kinetics, pH sensitivity, cation permeability, and binding to allosteric modulators. CHRNA3 forms heteropentameric neuronal acetylcholine receptors with CHRNA5, CHRNB2 and CHRNB4. CHRNA3:CHRNB4 being predominant in neurons of the autonomic ganglia, it is known as ganglionic nicotinic receptor. CHRNA3:CHRNB4 or CHRNA3:CHRNA5:CHRNB4 play also an important role in the habenulo-interpeduncular tract, modulating the mesolimbic dopamine system and affecting reward circuits and addiction. Hypothalamic CHRNA3:CHRNB4 nAChR activation by nicotine leads to activation of POMC neurons and a decrease in food intake. Also expressed in the urothelium where it modulates reflex bladder activity by increasing intracellular calcium through extracellular influx and basal ATP release. This chain is Neuronal acetylcholine receptor subunit alpha-3 (Chrna3), found in Mus musculus (Mouse).